The primary structure comprises 293 residues: MKKFSIVKHARIFFSITAVVLIVGIVSMFARGFNLGIDFTGGSILDIKFDQPVTVAQVRTVLSDHQLGSSVIQLGSSDQQVESSQSVLIRTGLISDSQRVDVMNDLSNRLGHNEVLRVENVGATVGGDLVKSAVGAVVLSWVLMIIYITIRFELRFALAAIVALIIDVMVTLTWFSVLHLEIDSSFVAALLTVVGYSVNGTIVVFDRIRENLHTHRRNESMGDLVDASIWQTMTRSVYTTLTTLFAVVAIFLFGGETIHNFSFAMLVGFCSGFYTSTFLAGSMWLFFRKKLKR.

6 helical membrane passes run 10-30 (ARIF…SMFA), 130-150 (VKSA…YITI), 158-178 (LAAI…FSVL), 185-205 (SFVA…IVVF), 244-264 (LFAV…FSFA), and 267-287 (VGFC…WLFF).

The protein belongs to the SecD/SecF family. SecF subfamily. As to quaternary structure, forms a complex with SecD. Part of the essential Sec protein translocation apparatus which comprises SecA, SecYEG and auxiliary proteins SecDF. Other proteins may also be involved.

It localises to the cell membrane. Part of the Sec protein translocase complex. Interacts with the SecYEG preprotein conducting channel. SecDF uses the proton motive force (PMF) to complete protein translocation after the ATP-dependent function of SecA. The sequence is that of Protein translocase subunit SecF from Acidaminococcus fermentans (strain ATCC 25085 / DSM 20731 / CCUG 9996 / CIP 106432 / VR4).